The following is a 124-amino-acid chain: Large ribosomal subunit protein uL29 (124 aa).

This sequence belongs to the universal ribosomal protein uL29 family.

The sequence is that of Large ribosomal subunit protein uL29 (RPL35) from Triticum aestivum (Wheat).